The following is a 199-amino-acid chain: 3-hexulose-6-phosphate isomerase (199 aa).

The region spanning 44-186 (LARQIVQPGR…FQSLWDHTEV (143 aa)) is the SIS domain. Substrate contacts are provided by residues serine 62 and 101–106 (SGSGTT). Glutamate 166 acts as the Proton acceptor in catalysis.

This sequence belongs to the SIS family. PHI subfamily.

The enzyme catalyses D-arabino-hex-3-ulose 6-phosphate = beta-D-fructose 6-phosphate. The protein operates within one-carbon metabolism; formaldehyde assimilation via RuMP pathway; D-fructose 6-phosphate from D-ribulose 5-phosphate and formaldehyde: step 2/2. Catalyzes the isomerization between 3-hexulose 6-phosphate and fructose 6-phosphate. The protein is 3-hexulose-6-phosphate isomerase (rmpB) of Mycobacterium gastri.